A 272-amino-acid chain; its full sequence is Lectin-like protein At1g53070 (272 aa).

The signal sequence occupies residues 1–23 (MKIQILCFTTLFLAIFTSQVTTA). The legume-lectin like stretch occupies residues 24–271 (YKFKFDYFGN…RHEIWDWTFQ (248 aa)). Asn33, Asn84, and Asn134 each carry an N-linked (GlcNAc...) asparagine glycan. Ser241 is subject to Phosphoserine.

This sequence belongs to the leguminous lectin family.

It localises to the secreted. It is found in the extracellular space. The protein resides in the apoplast. The sequence is that of Lectin-like protein At1g53070 from Arabidopsis thaliana (Mouse-ear cress).